We begin with the raw amino-acid sequence, 513 residues long: Bifunctional pantoate ligase/cytidylate kinase (513 aa).

Residues 1-282 (MGTFHRLTTT…VGQTRLIDNC (282 aa)) form a pantoate--beta-alanine ligase region. Residue 32-39 (MGALHGGH) coordinates ATP. The active-site Proton donor is histidine 39. Residue glutamine 63 participates in (R)-pantoate binding. Glutamine 63 is a binding site for beta-alanine. Position 152–155 (152–155 (GQKD)) interacts with ATP. (R)-pantoate is bound at residue glutamine 158. ATP-binding positions include valine 181 and 189–192 (LSSR). The interval 283–513 (LLDRRRPILA…HLYRSRFPQP (231 aa)) is cytidylate kinase.

It in the N-terminal section; belongs to the pantothenate synthetase family. This sequence in the C-terminal section; belongs to the cytidylate kinase family. Type 1 subfamily.

It localises to the cytoplasm. The catalysed reaction is (R)-pantoate + beta-alanine + ATP = (R)-pantothenate + AMP + diphosphate + H(+). It carries out the reaction CMP + ATP = CDP + ADP. It catalyses the reaction dCMP + ATP = dCDP + ADP. The protein operates within cofactor biosynthesis; (R)-pantothenate biosynthesis; (R)-pantothenate from (R)-pantoate and beta-alanine: step 1/1. Catalyzes the condensation of pantoate with beta-alanine in an ATP-dependent reaction via a pantoyl-adenylate intermediate. Functionally, catalyzes the transfer of a phosphate group from ATP to either CMP or dCMP to form CDP or dCDP and ADP, respectively. This chain is Bifunctional pantoate ligase/cytidylate kinase, found in Thermosynechococcus vestitus (strain NIES-2133 / IAM M-273 / BP-1).